We begin with the raw amino-acid sequence, 472 residues long: Tyrosine--tRNA ligase, mitochondrial (472 aa).

Residue tyrosine 72 coordinates L-tyrosine. ATP is bound at residue aspartate 76. Residues 77 to 86 (PTGDSLHVGH) carry the 'HIGH' region motif. L-tyrosine-binding residues include aspartate 116, tyrosine 216, glutamine 220, aspartate 223, and glutamine 242. Residues isoleucine 269 and lysine 279 each coordinate ATP. The 'KMSKS' region signature appears at 276–280 (KLGKS). N6-acetyllysine is present on residues lysine 350 and lysine 362.

This sequence belongs to the class-I aminoacyl-tRNA synthetase family. Homodimer.

Its subcellular location is the mitochondrion matrix. It catalyses the reaction tRNA(Tyr) + L-tyrosine + ATP = L-tyrosyl-tRNA(Tyr) + AMP + diphosphate + H(+). Catalyzes the attachment of tyrosine to tRNA(Tyr) in a two-step reaction: tyrosine is first activated by ATP to form Tyr-AMP and then transferred to the acceptor end of tRNA(Tyr). The chain is Tyrosine--tRNA ligase, mitochondrial (Yars2) from Mus musculus (Mouse).